The chain runs to 352 residues: Spermidine/putrescine import ATP-binding protein PotA (352 aa).

The 231-residue stretch at 7–237 (IELKNVSKKY…PKNKFVANFI (231 aa)) folds into the ABC transporter domain. Residue 39–46 (GPSGCGKT) coordinates ATP.

The protein belongs to the ABC transporter superfamily. Spermidine/putrescine importer (TC 3.A.1.11.1) family. In terms of assembly, the complex is composed of two ATP-binding proteins (PotA), two transmembrane proteins (PotB and PotC) and a solute-binding protein (PotD).

It is found in the cell membrane. It carries out the reaction ATP + H2O + polyamine-[polyamine-binding protein]Side 1 = ADP + phosphate + polyamineSide 2 + [polyamine-binding protein]Side 1.. Part of the ABC transporter complex PotABCD involved in spermidine/putrescine import. Responsible for energy coupling to the transport system. The polypeptide is Spermidine/putrescine import ATP-binding protein PotA (Clostridium acetobutylicum (strain ATCC 824 / DSM 792 / JCM 1419 / IAM 19013 / LMG 5710 / NBRC 13948 / NRRL B-527 / VKM B-1787 / 2291 / W)).